The chain runs to 358 residues: Ribosomal RNA-processing protein 8 (358 aa).

Residues 1–81 (MKPFEVPPWE…PQDSSDDDYE (81 aa)) form a disordered region. The segment covering 30-44 (AKKKPKKKKPKKKKA) has biased composition (basic residues). 2 positions are modified to phosphoserine: Ser-75 and Ser-76. 4 residues coordinate S-adenosyl-L-methionine: His-185, Gly-220, Asp-238, and Cys-267.

This sequence belongs to the methyltransferase superfamily. RRP8 family.

It localises to the nucleus. It is found in the nucleolus. Its function is as follows. Probable methyltransferase required to silence rDNA. This is Ribosomal RNA-processing protein 8 from Drosophila melanogaster (Fruit fly).